The chain runs to 76 residues: Small ribosomal subunit protein bS18 (76 aa).

Belongs to the bacterial ribosomal protein bS18 family. Part of the 30S ribosomal subunit. Forms a tight heterodimer with protein bS6.

Functionally, binds as a heterodimer with protein bS6 to the central domain of the 16S rRNA, where it helps stabilize the platform of the 30S subunit. The sequence is that of Small ribosomal subunit protein bS18 from Pelotomaculum thermopropionicum (strain DSM 13744 / JCM 10971 / SI).